A 492-amino-acid chain; its full sequence is 2,3-bisphosphoglycerate-independent phosphoglycerate mutase (492 aa).

Mn(2+)-binding residues include Asp11 and Ser61. The active-site Phosphoserine intermediate is the Ser61. Residues His118, Arg147 to Asp148, Arg177, Arg183, Arg248 to Arg251, and Lys321 each bind substrate. Mn(2+)-binding residues include Asp387, His391, Asp428, His429, and His446.

It belongs to the BPG-independent phosphoglycerate mutase family. In terms of assembly, monomer. It depends on Mn(2+) as a cofactor.

It catalyses the reaction (2R)-2-phosphoglycerate = (2R)-3-phosphoglycerate. It functions in the pathway carbohydrate degradation; glycolysis; pyruvate from D-glyceraldehyde 3-phosphate: step 3/5. In terms of biological role, catalyzes the interconversion of 2-phosphoglycerate and 3-phosphoglycerate. This chain is 2,3-bisphosphoglycerate-independent phosphoglycerate mutase, found in Helicobacter acinonychis (strain Sheeba).